The sequence spans 483 residues: Altronate oxidoreductase (483 aa).

Position 18–29 (18–29) interacts with NAD(+); sequence IIQFGEGNFLRA.

This sequence belongs to the mannitol dehydrogenase family. UxaB subfamily.

The enzyme catalyses D-altronate + NAD(+) = keto-D-tagaturonate + NADH + H(+). It functions in the pathway carbohydrate metabolism; pentose and glucuronate interconversion. This chain is Altronate oxidoreductase, found in Yersinia enterocolitica serotype O:8 / biotype 1B (strain NCTC 13174 / 8081).